Here is a 218-residue protein sequence, read N- to C-terminus: Cell division protein SepF (218 aa).

A disordered region spans residues 24–115 (EDVTASTDNV…IANRREQYQQ (92 aa)). Positions 28-43 (ASTDNVIPRSQQSVRA) are enriched in polar residues. A compositionally biased stretch (basic and acidic residues) spans 47–63 (PKQEPRNNHVQQDHQAR).

This sequence belongs to the SepF family. In terms of assembly, homodimer. Interacts with FtsZ.

It localises to the cytoplasm. Functionally, cell division protein that is part of the divisome complex and is recruited early to the Z-ring. Probably stimulates Z-ring formation, perhaps through the cross-linking of FtsZ protofilaments. Its function overlaps with FtsA. This chain is Cell division protein SepF, found in Streptococcus pyogenes serotype M4 (strain MGAS10750).